Here is a 227-residue protein sequence, read N- to C-terminus: Protein rapunzel (227 aa).

A helical transmembrane segment spans residues 179–196 (LAYLFCIGFIALMGYYGI).

The protein resides in the membrane. The protein is Protein rapunzel of Danio rerio (Zebrafish).